Reading from the N-terminus, the 376-residue chain is Alanine racemase 1 (376 aa).

Lys40 acts as the Proton acceptor; specific for D-alanine in catalysis. N6-(pyridoxal phosphate)lysine is present on Lys40. Arg138 contributes to the substrate binding site. The Proton acceptor; specific for L-alanine role is filled by Tyr268. Met316 provides a ligand contact to substrate.

It belongs to the alanine racemase family. It depends on pyridoxal 5'-phosphate as a cofactor.

It carries out the reaction L-alanine = D-alanine. It functions in the pathway amino-acid biosynthesis; D-alanine biosynthesis; D-alanine from L-alanine: step 1/1. In terms of biological role, catalyzes the interconversion of L-alanine and D-alanine. May also act on other amino acids. The polypeptide is Alanine racemase 1 (alr1) (Oceanobacillus iheyensis (strain DSM 14371 / CIP 107618 / JCM 11309 / KCTC 3954 / HTE831)).